The sequence spans 87 residues: Small ribosomal subunit protein bS18 (87 aa).

Belongs to the bacterial ribosomal protein bS18 family. In terms of assembly, part of the 30S ribosomal subunit. Forms a tight heterodimer with protein bS6.

In terms of biological role, binds as a heterodimer with protein bS6 to the central domain of the 16S rRNA, where it helps stabilize the platform of the 30S subunit. This chain is Small ribosomal subunit protein bS18, found in Mesomycoplasma hyopneumoniae (strain 232) (Mycoplasma hyopneumoniae).